Consider the following 59-residue polypeptide: Large ribosomal subunit protein uL30 (59 aa).

It belongs to the universal ribosomal protein uL30 family. Part of the 50S ribosomal subunit.

The sequence is that of Large ribosomal subunit protein uL30 from Listeria innocua serovar 6a (strain ATCC BAA-680 / CLIP 11262).